Reading from the N-terminus, the 532-residue chain is Cytochrome P450 monooxygenase pgmC (532 aa).

The chain crosses the membrane as a helical span at residues 15-32 (ISTLAVLIGFIALLTAWL). Cys-438 contributes to the heme binding site.

This sequence belongs to the cytochrome P450 family. Heme serves as cofactor.

Its subcellular location is the membrane. The protein operates within pigment biosynthesis. It functions in the pathway secondary metabolite biosynthesis. In terms of biological role, cytochrome P450 monooxygenase; part of the gene cluster that mediates the biosynthesis of pleosporalin A, ascomycone A, as well as a third cryptic naphthoquinone derived pigment, all responsible for the coloration of conidia. Involved in the oxidation of fusarubinaldehyde at C-9. PgmC has low substrate-specificity and is also able to use the pgmA product 3-acetonyl-1,6,8-trihydroxy-2-naphthaldehyde as a substrate. The pathway begins with the biosynthesis of the cyclized heptaketide 3-acetonyl-1,6,8-trihydroxy-2-naphthaldehyde by the NR-PKS pgmA. The C-6 hydroxyl group is further methylated by the O-methyltransferase pgmB to yield fusarubinaldehyde which is in turn oxidized by the cytochrome P450 monooxygenase pgmC at C-9. The C-1 hydroxyl group is then methylated spontaneously. Although pgmE, pgmD and pgmH are essential for the production of pleosporalin A, it is not the case for the 2 other final products and it remains difficult to assign a specific function to each enzyme. PgmF and pgmG seem not to be involved in pigment biosynthesis although they were regulated by the cluster-specific transcription factor pgmR. The polypeptide is Cytochrome P450 monooxygenase pgmC (Aspergillus terreus (strain NIH 2624 / FGSC A1156)).